The sequence spans 380 residues: Cytochrome b (380 aa).

Helical transmembrane passes span 34–54 (FGSL…LLAM), 78–99 (WLIR…YLHI), 114–134 (WNTG…GYVL), and 179–199 (FFAL…IHLT). Heme b contacts are provided by His84 and His98. His183 and His197 together coordinate heme b. Residue His202 coordinates a ubiquinone. 4 helical membrane-spanning segments follow: residues 227–247 (LKDF…ALFT), 289–309 (LGGV…PFLH), 321–341 (LSQT…WIGS), and 348–368 (FITI…ILFP).

This sequence belongs to the cytochrome b family. The cytochrome bc1 complex contains 11 subunits: 3 respiratory subunits (MT-CYB, CYC1 and UQCRFS1), 2 core proteins (UQCRC1 and UQCRC2) and 6 low-molecular weight proteins (UQCRH/QCR6, UQCRB/QCR7, UQCRQ/QCR8, UQCR10/QCR9, UQCR11/QCR10 and a cleavage product of UQCRFS1). This cytochrome bc1 complex then forms a dimer. Requires heme b as cofactor.

The protein localises to the mitochondrion inner membrane. Functionally, component of the ubiquinol-cytochrome c reductase complex (complex III or cytochrome b-c1 complex) that is part of the mitochondrial respiratory chain. The b-c1 complex mediates electron transfer from ubiquinol to cytochrome c. Contributes to the generation of a proton gradient across the mitochondrial membrane that is then used for ATP synthesis. The protein is Cytochrome b (MT-CYB) of Coracias caudatus (Lilac-breasted roller).